Here is a 419-residue protein sequence, read N- to C-terminus: Serine/threonine-protein kinase Kist (419 aa).

Positions 23 to 304 (WQVQSRLGSG…AEMALCSPFF (282 aa)) constitute a Protein kinase domain. ATP-binding positions include 29-37 (LGSGSSASV) and Lys54. Catalysis depends on proton acceptor residues Asp141 and Asp158. The 83-residue stretch at 324 to 406 (RLLNVLDDDY…KFVVATFYPL (83 aa)) folds into the RRM domain.

The protein belongs to the protein kinase superfamily. Ser/Thr protein kinase family. In terms of assembly, interacts with stathmin, PAM and CDKN1B/p27Kip1.

The protein localises to the nucleus. The enzyme catalyses L-seryl-[protein] + ATP = O-phospho-L-seryl-[protein] + ADP + H(+). The catalysed reaction is L-threonyl-[protein] + ATP = O-phospho-L-threonyl-[protein] + ADP + H(+). Functionally, upon serum stimulation, phosphorylates CDKN1B/p27Kip1, thus controlling CDKN1B subcellular location and cell cycle progression in G1 phase. May be involved in trafficking and/or processing of RNA. The polypeptide is Serine/threonine-protein kinase Kist (UHMK1) (Pongo abelii (Sumatran orangutan)).